The primary structure comprises 1888 residues: Protein mms22 (1888 aa).

Disordered stretches follow at residues 12–34 (DSQD…RGNE), 151–258 (FSSD…ISSN), and 316–354 (RRKL…SRFD). Composition is skewed to polar residues over residues 13–32 (SQDS…SQRG), 212–227 (SNLN…SSTI), and 338–348 (SDNSISTPTPT).

It belongs to the MMS22 family.

The protein resides in the nucleus. Involved in protection against replication-dependent DNA damage. May act by restoring active replication forks, repairing unusual DNA structures, and/or preventing aberrant DNA rearrangement at arrested replication forks. The protein is Protein mms22 (mus7) of Schizosaccharomyces pombe (strain 972 / ATCC 24843) (Fission yeast).